The primary structure comprises 182 residues: Adenylate kinase isoenzyme 6 homolog (182 aa).

The segment at 1–20 (MATPETRRRPNILVTGSPGT) is disordered. ATP contacts are provided by Gly-19, Gly-21, Lys-22, Ser-23, and Thr-24. The NMPbind stretch occupies residues 39–62 (EVSKEVRENNLQGDFDEQYNCHVL). Residues 116-126 (SRGYSEFKIKE) are LID. ATP is bound at residue Arg-117.

The protein belongs to the adenylate kinase family. AK6 subfamily. Monomer and homodimer. Interacts with small ribosomal subunit protein uS11. Not a structural component of 43S pre-ribosomes, but transiently interacts with them by binding to uS11.

The protein localises to the cytoplasm. Its subcellular location is the nucleus. The enzyme catalyses AMP + ATP = 2 ADP. The catalysed reaction is ATP + H2O = ADP + phosphate + H(+). Its function is as follows. Broad-specificity nucleoside monophosphate (NMP) kinase that catalyzes the reversible transfer of the terminal phosphate group between nucleoside triphosphates and monophosphates. Also has ATPase activity. Involved in the late cytoplasmic maturation steps of the 40S ribosomal particles, specifically 18S rRNA maturation. While NMP activity is not required for ribosome maturation, ATPase activity is. Associates transiently with small ribosomal subunit protein uS11. ATP hydrolysis breaks the interaction with uS11. May temporarily remove uS11 from the ribosome to enable a conformational change of the ribosomal RNA that is needed for the final maturation step of the small ribosomal subunit. Its NMP activity may have a role in nuclear energy homeostasis. AMP and dAMP are the preferred substrates, but CMP and TMP are also good substrates. ATP and dATP are the best phosphate donors. This Caenorhabditis elegans protein is Adenylate kinase isoenzyme 6 homolog.